The primary structure comprises 380 residues: Putative 8-amino-7-oxononanoate synthase (380 aa).

Arg18 serves as a coordination point for substrate. A pyridoxal 5'-phosphate-binding site is contributed by 106–107; it reads GY. Residue His131 participates in substrate binding. Residues Ser179, 205 to 208, and 236 to 239 contribute to the pyridoxal 5'-phosphate site; these read DEAH and TFGK. Lys239 carries the N6-(pyridoxal phosphate)lysine modification. Residue Thr352 coordinates substrate.

It belongs to the class-II pyridoxal-phosphate-dependent aminotransferase family. BioF subfamily. As to quaternary structure, homodimer. Pyridoxal 5'-phosphate serves as cofactor.

The catalysed reaction is 6-carboxyhexanoyl-[ACP] + L-alanine + H(+) = (8S)-8-amino-7-oxononanoate + holo-[ACP] + CO2. Its pathway is cofactor biosynthesis; biotin biosynthesis. Functionally, catalyzes the decarboxylative condensation of pimeloyl-[acyl-carrier protein] and L-alanine to produce 8-amino-7-oxononanoate (AON), [acyl-carrier protein], and carbon dioxide. The protein is Putative 8-amino-7-oxononanoate synthase (bioF) of Neisseria meningitidis serogroup B (strain ATCC BAA-335 / MC58).